The chain runs to 427 residues: Adenylosuccinate synthetase (427 aa).

GTP is bound by residues 12 to 18 and 40 to 42; these read GDEGKGK and GHT. Asp13 serves as the catalytic Proton acceptor. Residues Asp13 and Gly40 each coordinate Mg(2+). IMP contacts are provided by residues 13 to 16, 38 to 41, Thr128, Arg142, Gln223, Thr238, and Arg302; these read DEGK and NAGH. The active-site Proton donor is His41. 298-304 is a substrate binding site; the sequence is VTTGRAR. GTP is bound by residues Arg304, 330–332, and 412–414; these read KLD and GVG.

This sequence belongs to the adenylosuccinate synthetase family. Homodimer. The cofactor is Mg(2+).

Its subcellular location is the cytoplasm. The enzyme catalyses IMP + L-aspartate + GTP = N(6)-(1,2-dicarboxyethyl)-AMP + GDP + phosphate + 2 H(+). It functions in the pathway purine metabolism; AMP biosynthesis via de novo pathway; AMP from IMP: step 1/2. Functionally, plays an important role in the de novo pathway of purine nucleotide biosynthesis. Catalyzes the first committed step in the biosynthesis of AMP from IMP. In Frankia casuarinae (strain DSM 45818 / CECT 9043 / HFP020203 / CcI3), this protein is Adenylosuccinate synthetase.